A 460-amino-acid chain; its full sequence is tRNA modification GTPase MnmE (460 aa).

3 residues coordinate (6S)-5-formyl-5,6,7,8-tetrahydrofolate: Arg24, Glu81, and Lys121. Positions 218–385 (GMVVAIAGPP…LIAAIEDFAA (168 aa)) constitute a TrmE-type G domain. Residues 228–233 (NVGKST), 247–253 (SPHAGTT), and 272–275 (DTAG) contribute to the GTP site. Residues Ser232 and Thr253 each contribute to the Mg(2+) site. Lys460 contacts (6S)-5-formyl-5,6,7,8-tetrahydrofolate.

Belongs to the TRAFAC class TrmE-Era-EngA-EngB-Septin-like GTPase superfamily. TrmE GTPase family. In terms of assembly, homodimer. Heterotetramer of two MnmE and two MnmG subunits. Requires K(+) as cofactor.

It is found in the cytoplasm. Its function is as follows. Exhibits a very high intrinsic GTPase hydrolysis rate. Involved in the addition of a carboxymethylaminomethyl (cmnm) group at the wobble position (U34) of certain tRNAs, forming tRNA-cmnm(5)s(2)U34. The polypeptide is tRNA modification GTPase MnmE (Rhodopseudomonas palustris (strain BisB5)).